Here is a 442-residue protein sequence, read N- to C-terminus: Trigger factor (442 aa).

A PPIase FKBP-type domain is found at 165–250 (DDRVIIDFEG…LQKVMAPELP (86 aa)).

Belongs to the FKBP-type PPIase family. Tig subfamily.

The protein localises to the cytoplasm. The enzyme catalyses [protein]-peptidylproline (omega=180) = [protein]-peptidylproline (omega=0). Functionally, involved in protein export. Acts as a chaperone by maintaining the newly synthesized protein in an open conformation. Functions as a peptidyl-prolyl cis-trans isomerase. The polypeptide is Trigger factor (Coxiella burnetii (strain CbuK_Q154) (Coxiella burnetii (strain Q154))).